A 261-amino-acid polypeptide reads, in one-letter code: Gap junction beta-6 protein (261 aa).

Over 1–22 the chain is Cytoplasmic; the sequence is MDWGTLHTFVGGVNKHSTSIGK. Residues 23-45 traverse the membrane as a helical segment; it reads VWVTVLFVFRVMILVVAAQEVWG. At 46-75 the chain is on the extracellular side; the sequence is DEQEDFVCNTLQPGCRNVCYDHFFPVSHIR. The helical transmembrane segment at 76–98 threads the bilayer; the sequence is LWALQLIFVSTPALLVAMHVAYY. Topologically, residues 99 to 131 are cytoplasmic; the sequence is RHEAARRFRRGETRSEFKDLEDIKRQKVRIEGS. A helical transmembrane segment spans residues 132-154; that stretch reads LWWTYTSSIFFRIVFEAAFMYVF. At 155 to 192 the chain is on the extracellular side; it reads YFLYNGYHLPWVLKCGIQPCPNLVDCFISRPTEKTVFT. A helical membrane pass occupies residues 193-215; it reads IFMISASVICMLLNVAELCYLLL. The Cytoplasmic segment spans residues 216–261; the sequence is KVCFRRSKRAQTQKAPPNHALKESKQNEMNELISEGGQNAITGFPS.

Belongs to the connexin family. Beta-type (group I) subfamily. As to quaternary structure, a connexon is composed of a hexamer of connexins. Interacts with CNST.

The protein localises to the cell membrane. Its subcellular location is the cell junction. It localises to the gap junction. Its function is as follows. One gap junction consists of a cluster of closely packed pairs of transmembrane channels, the connexons, through which materials of low MW diffuse from one cell to a neighboring cell. The protein is Gap junction beta-6 protein (GJB6) of Bos taurus (Bovine).